Reading from the N-terminus, the 808-residue chain is Envelope glycoprotein B (808 aa).

The first 19 residues, 1-19 (MVPNKHLLLIILSFSTACG), serve as a signal peptide directing secretion. Over 20–701 (QTTPTTAVEK…TGILNFIKNP (682 aa)) the chain is Virion surface. Asn30 is a glycosylation site (N-linked (GlcNAc...) asparagine; by host). Cystine bridges form between Cys45–Cys498, Cys62–Cys454, Cys136–Cys201, Cys291–Cys338, and Cys520–Cys557. Residues 101-107 (IFNGWTR) are involved in fusion and/or binding to host membrane. N-linked (GlcNAc...) asparagine; by host glycosylation is present at Asn158. An involved in fusion and/or binding to host membrane region spans residues 187-195 (GWLWGTYRT). 11 N-linked (GlcNAc...) asparagine; by host glycosylation sites follow: Asn239, Asn251, Asn285, Asn331, Asn344, Asn355, Asn361, Asn532, Asn569, Asn587, and Asn598. 2 hydrophobic membrane proximal region regions span residues 647-699 (FDNS…NFIK) and 658-698 (IIQD…LNFI). Residues 702-722 (LGGMFTFLLIGAVIILVILLV) traverse the membrane as a helical segment. Residues 723-808 (RRTNNMSQAP…KQISTEDKIV (86 aa)) are Intravirion-facing.

Belongs to the herpesviridae glycoprotein B family. Homotrimer; disulfide-linked. Binds to heparan sulfate proteoglycans. Interacts with gH/gL heterodimer. In terms of processing, a proteolytic cleavage by host furin generates two subunits that remain linked by disulfide bonds.

It is found in the virion membrane. It localises to the host cell membrane. The protein localises to the host endosome membrane. The protein resides in the host Golgi apparatus membrane. In terms of biological role, envelope glycoprotein that forms spikes at the surface of virion envelope. Essential for the initial attachment to heparan sulfate moieties of the host cell surface proteoglycans. Involved in fusion of viral and cellular membranes leading to virus entry into the host cell. Following initial binding to its host receptors, membrane fusion is mediated by the fusion machinery composed at least of gB and the heterodimer gH/gL. May be involved in the fusion between the virion envelope and the outer nuclear membrane during virion egress. This chain is Envelope glycoprotein B, found in Saimiriine herpesvirus 2 (strain 11) (SaHV-2).